Consider the following 268-residue polypeptide: Tryptophan synthase alpha chain (268 aa).

Catalysis depends on proton acceptor residues glutamate 49 and aspartate 60.

This sequence belongs to the TrpA family. As to quaternary structure, tetramer of two alpha and two beta chains.

It catalyses the reaction (1S,2R)-1-C-(indol-3-yl)glycerol 3-phosphate + L-serine = D-glyceraldehyde 3-phosphate + L-tryptophan + H2O. It participates in amino-acid biosynthesis; L-tryptophan biosynthesis; L-tryptophan from chorismate: step 5/5. In terms of biological role, the alpha subunit is responsible for the aldol cleavage of indoleglycerol phosphate to indole and glyceraldehyde 3-phosphate. The chain is Tryptophan synthase alpha chain from Aeromonas salmonicida (strain A449).